A 353-amino-acid polypeptide reads, in one-letter code: Trans-enoyl reductase fsa3 (353 aa).

45–48 (VDTK) serves as a coordination point for NADP(+). 131–138 (ISFMTTGL) contributes to the substrate binding site. NADP(+) is bound by residues 166–169 (SSAT), 189–192 (SPRN), Tyr-207, and 254–255 (LE). A substrate-binding site is contributed by 275 to 279 (GPQML). Residue 344-345 (IS) participates in NADP(+) binding.

The protein belongs to the zinc-containing alcohol dehydrogenase family. Monomer.

It carries out the reaction L-serine + 7 malonyl-CoA + acetyl-CoA + 2 S-adenosyl-L-methionine + ATP + 8 NADPH + 11 H(+) = (5S)-3-[(2E,6R,8E,10E,12E)-2,6-dimethyltetradeca-2,8,10,12-tetraenoyl]-5-(hydroxymethyl)pyrrolidine-2,4-dione + AMP + 2 S-adenosyl-L-homocysteine + 7 CO2 + diphosphate + 8 NADP(+) + 8 CoA + 6 H2O. The protein operates within mycotoxin biosynthesis. Trans-enoyl reductase; part of the gene cluster that mediates the biosynthesis of HIV-1 integrase inhibitor equisetin and of fusarisetin A, both trans-fused decalin-containing tetramic acids showing also antimicrobial activity. The PKS module of fsa1 together with the enoylreductase fsa3 catalyze the formation of the polyketide unit which is then conjugated to L-serine by the condensation domain of the fsa1 NRPS module. Activity of the Dieckmann cyclase domain (RED) results in release of the Dieckmann product intermediate. Diels-Alderase fsa2 is involved in endo-selective Diels-Alder cycloaddition to form the decalin ring, leading to the production of N-desmethylequisetin also called trichosetin. Subsequent N-methylation is carried out by fsa4 to give equisetin. The enzymatic gene responsible for the conversion of equisetin to fusarisetin A has not been identified yet and is probably located outside of the fsa cluster. The protein is Trans-enoyl reductase fsa3 of Fusarium sp. (strain FN080326).